Reading from the N-terminus, the 287-residue chain is Nucleoid occlusion protein (287 aa).

Positions Glu-146–Leu-165 form a DNA-binding region, H-T-H motif.

Belongs to the ParB family.

The protein resides in the cytoplasm. It is found in the nucleoid. Functionally, effects nucleoid occlusion by binding relatively nonspecifically to DNA and preventing the assembly of the division machinery in the vicinity of the nucleoid, especially under conditions that disturb the cell cycle. It helps to coordinate cell division and chromosome segregation by preventing the formation of the Z ring through the nucleoid, which would cause chromosome breakage. The chain is Nucleoid occlusion protein from Listeria monocytogenes serotype 4a (strain HCC23).